Here is a 421-residue protein sequence, read N- to C-terminus: Zinc metalloproteinase-disintegrin-like lachestatin-1 (421 aa).

Residues 10-206 (KYVKLVLVAD…DMPQCILEKP (197 aa)) enclose the Peptidase M12B domain. 3 disulfide bridges follow: Cys121–Cys201, Cys161–Cys185, and Cys163–Cys168. His146 is a binding site for Zn(2+). Glu147 is a catalytic residue. Zn(2+)-binding residues include His150 and His156. Positions 214–299 (PPVCGNYFVE…AECTDRFQRN (86 aa)) constitute a Disintegrin domain. Val216, Asn219, Phe221, Glu223, Glu226, and Asp229 together coordinate Ca(2+). Disulfide bonds link Cys217/Cys246, Cys228/Cys241, Cys230/Cys236, Cys240/Cys263, Cys254/Cys260, Cys259/Cys285, Cys272/Cys292, Cys279/Cys310, Cys303/Cys315, Cys322/Cys372, Cys337/Cys383, Cys350/Cys360, Cys367/Cys409, and Cys403/Cys414. Positions 278–280 (ECD) match the D/ECD-tripeptide motif. Positions 280, 281, 283, 294, and 295 each coordinate Ca(2+). Residue Asn312 is glycosylated (N-linked (GlcNAc...) asparagine).

Belongs to the venom metalloproteinase (M12B) family. P-III subfamily. P-IIIc sub-subfamily. Homodimer; disulfide-linked. Zn(2+) serves as cofactor. In terms of tissue distribution, expressed by the venom gland.

It localises to the secreted. In terms of biological role, snake venom zinc metalloprotease that induces apoptosis in vascular endothelial cells (VEC), without degrading the extracellular matrix (it cannot cleave collagen) or inhibiting adhesion of VEC. Has also fibrinogenolytic and hemorrhagic activities. This Lachesis muta rhombeata (Bushmaster) protein is Zinc metalloproteinase-disintegrin-like lachestatin-1.